We begin with the raw amino-acid sequence, 459 residues long: Cysteine--tRNA ligase (459 aa).

A Zn(2+)-binding site is contributed by Cys-28. Residues 30–40 (ITVYDLCHVGH) carry the 'HIGH' region motif. Residues Cys-209, His-234, and Glu-238 each contribute to the Zn(2+) site. Residues 266 to 270 (KMSKS) carry the 'KMSKS' region motif. Residue Lys-269 participates in ATP binding.

The protein belongs to the class-I aminoacyl-tRNA synthetase family. As to quaternary structure, monomer. Zn(2+) serves as cofactor.

The protein localises to the cytoplasm. The enzyme catalyses tRNA(Cys) + L-cysteine + ATP = L-cysteinyl-tRNA(Cys) + AMP + diphosphate. This is Cysteine--tRNA ligase (cysS) from Pasteurella multocida (strain Pm70).